Consider the following 208-residue polypeptide: Probable GTP-binding protein EngB (208 aa).

One can recognise an EngB-type G domain in the interval 18-187; sequence KQFEICVIGR…FALMKKVVIQ (170 aa). GTP-binding positions include 26–33, 52–56, 69–72, 135–138, and 166–168; these read GRSNVGKS, GRTQL, DLPG, NKLD, and VSA. Residues S33 and T54 each coordinate Mg(2+).

The protein belongs to the TRAFAC class TrmE-Era-EngA-EngB-Septin-like GTPase superfamily. EngB GTPase family. Mg(2+) is required as a cofactor.

Its function is as follows. Necessary for normal cell division and for the maintenance of normal septation. This is Probable GTP-binding protein EngB from Ureaplasma parvum serovar 3 (strain ATCC 27815 / 27 / NCTC 11736).